A 148-amino-acid polypeptide reads, in one-letter code: Ubiquitin-conjugating enzyme E2 30 (148 aa).

The 147-residue stretch at 1–147 folds into the UBC core domain; it reads MASKRINKEL…AQSWTQKYAM (147 aa). C85 acts as the Glycyl thioester intermediate in catalysis.

It belongs to the ubiquitin-conjugating enzyme family. As to quaternary structure, interacts with RGLG3 and RGLG4. Ubiquitously expressed at very low levels.

The catalysed reaction is S-ubiquitinyl-[E1 ubiquitin-activating enzyme]-L-cysteine + [E2 ubiquitin-conjugating enzyme]-L-cysteine = [E1 ubiquitin-activating enzyme]-L-cysteine + S-ubiquitinyl-[E2 ubiquitin-conjugating enzyme]-L-cysteine.. It functions in the pathway protein modification; protein ubiquitination. Accepts the ubiquitin from the E1 complex and catalyzes its covalent attachment to other proteins. This is Ubiquitin-conjugating enzyme E2 30 (UBC30) from Arabidopsis thaliana (Mouse-ear cress).